We begin with the raw amino-acid sequence, 300 residues long: Cation-efflux pump FieF (300 aa).

4 consecutive transmembrane segments (helical) span residues alanine 12–tryptophan 32, isoleucine 39–valine 59, alanine 82–isoleucine 102, and proline 114–phenylalanine 134. Zn(2+)-binding residues include aspartate 45 and aspartate 49. Zn(2+) contacts are provided by histidine 153 and aspartate 157. Helical transmembrane passes span serine 156–histidine 176 and alanine 178–glycine 198.

This sequence belongs to the cation diffusion facilitator (CDF) transporter (TC 2.A.4) family. FieF subfamily. As to quaternary structure, homodimer.

It is found in the cell inner membrane. It catalyses the reaction Zn(2+)(in) + H(+)(out) = Zn(2+)(out) + H(+)(in). It carries out the reaction Cd(2+)(in) + H(+)(out) = Cd(2+)(out) + H(+)(in). The enzyme catalyses Fe(2+)(in) + H(+)(out) = Fe(2+)(out) + H(+)(in). In terms of biological role, divalent metal cation transporter which exports Zn(2+), Cd(2+) and possibly Fe(2+). May be involved in zinc and iron detoxification by efflux. This is Cation-efflux pump FieF from Escherichia coli O7:K1 (strain IAI39 / ExPEC).